We begin with the raw amino-acid sequence, 489 residues long: Endothelial zinc finger protein induced by tumor necrosis factor alpha (489 aa).

Positions 1 to 15 are enriched in basic and acidic residues; the sequence is MKELDPKNDISEDKL. Disordered regions lie at residues 1-61 and 98-122; these read MKEL…PLGI and EKGA…KPPM. C2H2-type zinc fingers lie at residues 130 to 152, 158 to 180, 186 to 208, 214 to 236, 242 to 264, 270 to 292, 298 to 320, 326 to 348, 354 to 376, 382 to 404, 410 to 432, 438 to 460, and 466 to 488; these read YDCS…QRIH, FECD…QRVH, YACG…QRTH, YVCD…ERIH, YVCP…QRTH, YACK…QRNH, YVCG…QRFH, FECS…QRIH, YECY…QIVH, YVCG…QRIH, YRCG…QRIH, and YRCG…LRIH.

This sequence belongs to the krueppel C2H2-type zinc-finger protein family. In terms of tissue distribution, highly expressed in placenta, followed by brain, testis, pancreas, heart, small intestine, muscle, uterus, prostate and peripheral blood leukocytes. Not detected in liver, lung, colon, stomach, salivary and thyroid gland.

It localises to the nucleus. Its function is as follows. May be involved in transcriptional regulation. The polypeptide is Endothelial zinc finger protein induced by tumor necrosis factor alpha (ZNF71) (Homo sapiens (Human)).